The following is a 770-amino-acid chain: Amyloid-beta precursor protein (770 aa).

An N-terminal signal peptide occupies residues 1-17 (MLPSLALLLLAAWTVRA). The Extracellular portion of the chain corresponds to 18-701 (LEVPTDGNAG…AEDVGSNKGA (684 aa)). The GFLD subdomain stretch occupies residues 28-123 (LLAEPQIAMF…PYRCLVGEFV (96 aa)). One can recognise an E1 domain in the interval 28-189 (LLAEPQIAMF…RGVEFVCCPL (162 aa)). 6 cysteine pairs are disulfide-bonded: Cys-38–Cys-62, Cys-73–Cys-117, Cys-98–Cys-105, Cys-133–Cys-187, Cys-144–Cys-174, and Cys-158–Cys-186. 96–110 (NWCKRGRKQCKTHTH) serves as a coordination point for heparin. Residues 131-189 (DKCKFLHQERMDVCETHLHWHTVAKETCSEKSTNLHDYGMLLPCGIDKFRGVEFVCCPL) are cuBD subdomain. Positions 147, 151, and 168 each coordinate Cu(2+). The zinc-binding stretch occupies residues 181–188 (GVEFVCCP). 3 residues coordinate Zn(2+): Glu-183, Cys-186, and Cys-187. The span at 193–207 (SDSVDSADAEEDDSD) shows a compositional bias: acidic residues. A disordered region spans residues 193-284 (SDSVDSADAE…TTTTTTESVE (92 aa)). Ser-198 is subject to Phosphoserine; by CK2. Ser-206 carries the post-translational modification Phosphoserine; by CK1. Sulfotyrosine occurs at positions 217 and 262. Over residues 228-264 (VAEEEEVADVEEEEADDDEDVEDGDEVEEEAEEPYEE) the composition is skewed to acidic residues. The segment covering 268–281 (RTTSTATTTTTTTE) has biased composition (low complexity). Disulfide bonds link Cys-291-Cys-341, Cys-300-Cys-324, and Cys-316-Cys-337. A BPTI/Kunitz inhibitor domain is found at 291–341 (CSEQAETGPCRAMISRWYFDVTEGKCVPFFYGGCGGNRNNFDTEEYCMAVC). Tyr-336 carries the sulfotyrosine modification. The OX-2 signature appears at 344-365 (VSTQSLLKTTSEPLPQDPDKLP). The region spanning 374–565 (AVDKYLETPG…EEIQDEVDEL (192 aa)) is the E2 domain. The heparin-binding stretch occupies residues 391–423 (FQKAKERLEAKHRERMSQVMREWEEAERQAKNL). Ser-441 is subject to Phosphoserine. A heparin-binding region spans residues 491–522 (FNMLKKYVRAEQKDRQHTLKHFEHVRMVDPKK). Tyr-497 is subject to Phosphotyrosine. The tract at residues 523–540 (AAQIRSQVMTHLRVIYER) is collagen-binding. Asn-542 and Asn-571 each carry an N-linked (GlcNAc...) asparagine glycan. Cu(2+) is bound by residues His-677 and His-685. His-677 and His-685 together coordinate Zn(2+). Positions 695–722 (VGSNKGAIIGLMVGGVVIATVIVITLVM) are interaction with PSEN1. Residues 702 to 722 (IIGLMVGGVVIATVIVITLVM) traverse the membrane as a helical segment. Topologically, residues 723-770 (LKKKQYTSIHHGVVEVDAAVTPEERHLSKMQQNGYENPTYKFFEQMQN) are cytoplasmic. The Basolateral sorting signal motif lies at 724–734 (KKKQYTSIHHG). Thr-729 carries the phosphothreonine modification. Ser-730 carries the post-translational modification Phosphoserine; by APP-kinase I. Positions 732–751 (HHGVVEVDAAVTPEERHLSK) are interaction with G(o)-alpha. Thr-743 bears the Phosphothreonine; by CDK5 and MAPK10 and LRRK2 mark. The interaction with DAB2 stretch occupies residues 756–770 (GYENPTYKFFEQMQN). The interval 756 to 770 (GYENPTYKFFEQMQN) is required for the interaction with KIF5B and for anterograde transport in axons. Position 757 is a phosphotyrosine; by ABL1 (Tyr-757). The short motif at 757–762 (YENPTY) is the YENPXY motif; contains endocytosis signal element. Residue Lys-763 forms a Glycyl lysine isopeptide (Lys-Gly) (interchain with G-Cter in ubiquitin) linkage.

It belongs to the APP family. In terms of assembly, binds, via its C-terminus, to the PID domain of several cytoplasmic proteins, including APBB family members, the APBA family, MAPK8IP1, SHC1, NUMB and DAB1. Binding to DAB1 inhibits its serine phosphorylation. Interacts (via NPXY motif) with DAB2 (via PID domain); the interaction is impaired by tyrosine phosphorylation of the NPXY motif. Also interacts with GPCR-like protein BPP, APPBP1, IB1, KNS2 (via its TPR domains), APPBP2 (via BaSS) and DDB1. In vitro, it binds MAPT via the MT-binding domains. Associates with microtubules in the presence of ATP and in a kinesin-dependent manner. Interacts, through a C-terminal domain, with GNAO1. Amyloid-beta protein 42 binds CHRNA7 in hippocampal neurons. Amyloid-beta associates with HADH2. Interacts with ANKS1B and AGER. Interacts with CPEB1. Interacts with ITM2B. Interacts with ITM2C. Interacts with IDE. Can form homodimers; dimerization is enhanced in the presence of Cu(2+) ions. Can form homodimers; this is promoted by heparin binding. Amyloid-beta protein 40 interacts with S100A9. CTF-alpha product of APP interacts with GSAP. Isoform APP695 interacts with SORL1 (via N-terminal ectodomain); this interaction retains APP in the trans-Golgi network and reduces processing into soluble APP-alpha and amyloid-beta peptides. The C99 fragment also interacts with SORL1. Isoform APP751 interacts with SORL1. Isoform APP770 interacts with SORL1. Interacts with PLD3. Interacts with VDAC1. Interacts with NSG1; could regulate APP processing. Amyloid-beta protein 42 interacts with FPR2. Interacts with SYT7. Interacts (via transmembrane region) with PSEN1; the interaction is direct. Interacts with LRRK2. Interacts (via cytoplasmic domain) with KIF5B. Interacts (via C-terminus) with APBB2/FE65L1 (via C-terminus). Interacts (via intracellular domain) with APBB3. Proteolytically processed under normal cellular conditions. Cleavage either by alpha-secretase, beta-secretase or theta-secretase leads to generation and extracellular release of soluble APP peptides, S-APP-alpha and S-APP-beta, and the retention of corresponding membrane-anchored C-terminal fragments, C80, C83 and C99. Subsequent processing of C80 and C83 by gamma-secretase yields P3 peptides. This is the major secretory pathway and is non-amyloidogenic. Alternatively, presenilin/nicastrin-mediated gamma-secretase processing of C99 releases the amyloid-beta proteins, amyloid-beta protein 40 and amyloid-beta protein 42, major components of amyloid plaques, and the cytotoxic C-terminal fragments, gamma-CTF(50), gamma-CTF(57) and gamma-CTF(59). PSEN1 cleavage is more efficient with C83 than with C99 as substrate (in vitro). Amyloid-beta protein 40 and Amyloid-beta protein 42 are cleaved by ACE. Many other minor amyloid-beta peptides, amyloid-beta 1-X peptides, are found in cerebral spinal fluid (CSF) including the amyloid-beta X-15 peptides, produced from the cleavage by alpha-secretase. In terms of processing, proteolytically cleaved by caspases during neuronal apoptosis. Cleavage at Asp-739 by either CASP6, CASP8 or CASP9 results in the production of the neurotoxic C31 peptide and the increased production of amyloid-beta peptides. Post-translationally, N- and O-glycosylated. Phosphorylation in the C-terminal on tyrosine, threonine and serine residues is neuron-specific. Phosphorylation can affect APP processing, neuronal differentiation and interaction with other proteins. Phosphorylated on Thr-743 in neuronal cells by Cdc5 kinase and Mapk10, in dividing cells by Cdc2 kinase in a cell-cycle dependent manner with maximal levels at the G2/M phase and, in vitro, by GSK-3-beta. The Thr-743 phosphorylated form causes a conformational change which reduces binding of Fe65 family members. In dopaminergic (DA) neurons, phosphorylation on Thr-743 by LRKK2 promotes the production and the nuclear translocation of the APP intracellular domain (AICD) which induces DA neuron apoptosis. Phosphorylation on Tyr-757 is required for SHC binding. Phosphorylated in the extracellular domain by casein kinases on both soluble and membrane-bound APP. This phosphorylation is inhibited by heparin. In terms of processing, extracellular binding and reduction of copper, results in a corresponding oxidation of Cys-144 and Cys-158, and the formation of a disulfide bond. Post-translationally, trophic-factor deprivation triggers the cleavage of surface APP by beta-secretase to release sAPP-beta which is further cleaved to release an N-terminal fragment of APP (N-APP). Amyloid-beta peptides are degraded by IDE. In terms of processing, sulfated on tyrosine residues. As to expression, expressed in the brain with expression in cortex, cerebellum, hippocampus, olfactory bulb, neurons, astrocytes and microglia (at protein level). Expressed in the retinal lens. Expressed at a low level in muscle cells (at protein level). Expressed in kidney. In terms of tissue distribution, widely expressed. Expressed in several different brain regions including hippocampus, substantia nigra pars compacta and cerebellum. Within the cerebellum, abundantly expressed in Purkinje cells. As to expression, expressed in the brain, kidney and liver. Expressed in several different brain regions including hippocampus, substantia nigra pars compacta and cerebellum. Within the cerebellum, abundantly expressed in Purkinje cells. Expressed in several different brain regions including hippocampus, substantia nigra pars compacta and cerebellum. Within the cerebellum, abundantly expressed in Purkinje cells.

Its subcellular location is the cell membrane. It is found in the membrane. The protein resides in the perikaryon. The protein localises to the cell projection. It localises to the growth cone. Its subcellular location is the clathrin-coated pit. It is found in the early endosome. The protein resides in the cytoplasmic vesicle. The protein localises to the golgi apparatus. It localises to the trans-Golgi network. Its subcellular location is the endoplasmic reticulum. It is found in the secreted. The protein resides in the cell surface. The protein localises to the nucleus. It localises to the cytoplasm. Its function is as follows. Functions as a cell surface receptor and performs physiological functions on the surface of neurons relevant to neurite growth, neuronal adhesion and axonogenesis. Interaction between APP molecules on neighboring cells promotes synaptogenesis. Involved in cell mobility and transcription regulation through protein-protein interactions. Can promote transcription activation through binding to APBB1-KAT5 and inhibit Notch signaling through interaction with Numb. Couples to apoptosis-inducing pathways such as those mediated by G(o) and JIP. Inhibits G(o)-alpha ATPase activity. Acts as a kinesin I membrane receptor, mediating the axonal transport of beta-secretase and presenilin 1. By acting as a kinesin I membrane receptor, plays a role in axonal anterograde transport of cargo towards synapses in axons. May be involved in copper homeostasis/oxidative stress through copper ion reduction. Can regulate neurite outgrowth through binding to components of the extracellular matrix such as heparin and collagen I and IV. The splice isoforms that contain the BPTI domain possess protease inhibitor activity. Induces a AGER-dependent pathway that involves activation of p38 MAPK, resulting in internalization of amyloid-beta peptide and leading to mitochondrial dysfunction in cultured cortical neurons. Provides Cu(2+) ions for GPC1 which are required for release of nitric oxide (NO) and subsequent degradation of the heparan sulfate chains on GPC1. Amyloid-beta peptides are lipophilic metal chelators with metal-reducing activity. Binds transient metals such as copper, zinc and iron. Rat and mouse amyloid-beta peptides bind only weakly transient metals and have little reducing activity due to substitutions of transient metal chelating residues. Amyloid-beta protein 42 may activate mononuclear phagocytes in the brain and elicit inflammatory responses. Promotes both tau aggregation and TPK II-mediated phosphorylation. Also binds GPC1 in lipid rafts. In terms of biological role, the gamma-CTF peptides as well as the caspase-cleaved peptides, including C31, are potent enhancers of neuronal apoptosis. This chain is Amyloid-beta precursor protein, found in Mus musculus (Mouse).